We begin with the raw amino-acid sequence, 515 residues long: MTKRALISVSDKNGIVEFAQELTKLGWEIISTGGTKVALDNAGVATIAIDDVTGFPEMMDGRVKTLHPNIHGGLLARRDVDSHLQAAKDHEIGLIDLVVVNLYPFKETILRPDVTYDLAVENIDIGGPSMLRSAAKNHASVTVVVDPADYPTVLGEIAEQGQTTYPTRQRLAAKVFRHTAAYDALIADYFTKQVGEDKPEKLTITYDLNQPMRYGENPQQNADFYQNALPTDYSIAAAKQLNGKELSFNNIRDADAAIRIIRDFKDRPTVVALKHMNPCGIGQAETIEKAWDYAYEADPVSIFGGIVVLNREVDAATAEKMHPIFLEIIIAPSYSAEALAILTNKKKNLRILELAFDAQDASEVEKEFTGVVGGLLVQDQDVVVESPADWQVVTERQPSEQEWAAMEFAWKSSKYVKSNGIIITNDKMTLGVGPGQTNRVASVRIAIEQAKDRLEGAVLASDAFFPFADNVEEIAAAGIKAIIQPGGSVRDQDSIDMANKYGLTMVFTGVRHFRH.

Positions 1–145 (MTKRALISVS…KNHASVTVVV (145 aa)) constitute an MGS-like domain.

This sequence belongs to the PurH family.

It catalyses the reaction (6R)-10-formyltetrahydrofolate + 5-amino-1-(5-phospho-beta-D-ribosyl)imidazole-4-carboxamide = 5-formamido-1-(5-phospho-D-ribosyl)imidazole-4-carboxamide + (6S)-5,6,7,8-tetrahydrofolate. The enzyme catalyses IMP + H2O = 5-formamido-1-(5-phospho-D-ribosyl)imidazole-4-carboxamide. The protein operates within purine metabolism; IMP biosynthesis via de novo pathway; 5-formamido-1-(5-phospho-D-ribosyl)imidazole-4-carboxamide from 5-amino-1-(5-phospho-D-ribosyl)imidazole-4-carboxamide (10-formyl THF route): step 1/1. It functions in the pathway purine metabolism; IMP biosynthesis via de novo pathway; IMP from 5-formamido-1-(5-phospho-D-ribosyl)imidazole-4-carboxamide: step 1/1. This Streptococcus suis (strain 98HAH33) protein is Bifunctional purine biosynthesis protein PurH.